We begin with the raw amino-acid sequence, 486 residues long: NADH-ubiquinone oxidoreductase chain 4 (486 aa).

13 consecutive transmembrane segments (helical) span residues 26–46 (HFYL…YINF), 76–96 (GLLF…VLLI), 113–132 (LYYT…FWAL), 134–156 (YISF…HIYG), 165–185 (FYVL…IVVI), 209–231 (IIWL…HVWL), 239–259 (PLAG…YAIL), 271–291 (ILYT…TSLA), 298–318 (LKVI…LGVC), 329–349 (IVLG…VGGI), 372–392 (LATY…TGNF), 407–427 (PIIG…QLKL), and 452–472 (FIMN…QIMY).

It belongs to the complex I subunit 4 family. As to quaternary structure, complex I is composed of 37 different subunits.

Its subcellular location is the mitochondrion membrane. The catalysed reaction is a ubiquinone + NADH + 5 H(+)(in) = a ubiquinol + NAD(+) + 4 H(+)(out). Its function is as follows. Core subunit of the mitochondrial membrane respiratory chain NADH dehydrogenase (Complex I) that is believed to belong to the minimal assembly required for catalysis. Complex I functions in the transfer of electrons from NADH to the respiratory chain. The immediate electron acceptor for the enzyme is believed to be ubiquinone. This Yarrowia lipolytica (strain CLIB 122 / E 150) (Yeast) protein is NADH-ubiquinone oxidoreductase chain 4 (ND4).